The primary structure comprises 386 residues: GTPase Obg (386 aa).

Residues 4-162 (SNFVDYVKIY…RTVILQLKLL (159 aa)) enclose the Obg domain. The disordered stretch occupies residues 18–44 (KGGRGSSHFRREKYIPKGGPDGGDGGR). In terms of domain architecture, OBG-type G spans 163 to 329 (ADVGLVGFPN…LKDLLWKELN (167 aa)). GTP is bound by residues 169-176 (GFPNAGKS), 194-198 (FTTLE), 216-219 (DIPG), 283-286 (TKSD), and 310-312 (SSI). The Mg(2+) site is built by serine 176 and threonine 196. The segment at 357–386 (YIFPVDEDEDDPDEEYEEYWDDDEDEDTRK) is disordered.

This sequence belongs to the TRAFAC class OBG-HflX-like GTPase superfamily. OBG GTPase family. In terms of assembly, monomer. Mg(2+) is required as a cofactor.

It localises to the cytoplasm. Functionally, an essential GTPase which binds GTP, GDP and possibly (p)ppGpp with moderate affinity, with high nucleotide exchange rates and a fairly low GTP hydrolysis rate. Plays a role in control of the cell cycle, stress response, ribosome biogenesis and in those bacteria that undergo differentiation, in morphogenesis control. The sequence is that of GTPase Obg from Parabacteroides distasonis (strain ATCC 8503 / DSM 20701 / CIP 104284 / JCM 5825 / NCTC 11152).